We begin with the raw amino-acid sequence, 60 residues long: MAVPRRKTSPSRRGMRRSADAIKRPTYVEDKDSGELRRPHHLDLKTGMYKGRQVLKKKDS.

Basic residues predominate over residues 1–16 (MAVPRRKTSPSRRGMR). The disordered stretch occupies residues 1-60 (MAVPRRKTSPSRRGMRRSADAIKRPTYVEDKDSGELRRPHHLDLKTGMYKGRQVLKKKDS). A compositionally biased stretch (basic and acidic residues) spans 17–44 (RSADAIKRPTYVEDKDSGELRRPHHLDL).

This chain is Large ribosomal subunit protein bL32, found in Rhodopseudomonas palustris (strain ATCC BAA-98 / CGA009).